Consider the following 105-residue polypeptide: Small ribosomal subunit protein uS10 (105 aa).

Belongs to the universal ribosomal protein uS10 family. As to quaternary structure, part of the 30S ribosomal subunit.

In terms of biological role, involved in the binding of tRNA to the ribosomes. In Desulfovibrio desulfuricans (strain ATCC 27774 / DSM 6949 / MB), this protein is Small ribosomal subunit protein uS10.